The following is a 261-amino-acid chain: Pyridoxine-5'-phosphate oxidase (261 aa).

Position 42 to 45 (42 to 45 (RGDR)) interacts with pyridoxal 5'-phosphate. 95 to 98 (RMLL) is an FMN binding site. Pyridoxal 5'-phosphate is bound at residue Lys100. Residues 110–111 (FT), 116–117 (RK), and Gln139 each bind FMN. Positions 157, 161, and 165 each coordinate pyridoxal 5'-phosphate. Residues 174 to 175 (QS) and Trp219 contribute to the FMN site. 225-227 (RLH) contributes to the pyridoxal 5'-phosphate binding site. Residue Arg229 participates in FMN binding. Thr238 is subject to Phosphothreonine. Ser241 is modified (phosphoserine).

The protein belongs to the pyridoxamine 5'-phosphate oxidase family. In terms of assembly, homodimer. Requires FMN as cofactor. In terms of tissue distribution, detected in adult liver.

The catalysed reaction is pyridoxamine 5'-phosphate + O2 + H2O = pyridoxal 5'-phosphate + H2O2 + NH4(+). The enzyme catalyses pyridoxine 5'-phosphate + O2 = pyridoxal 5'-phosphate + H2O2. The protein operates within cofactor metabolism; pyridoxal 5'-phosphate salvage; pyridoxal 5'-phosphate from pyridoxamine 5'-phosphate: step 1/1. It participates in cofactor metabolism; pyridoxal 5'-phosphate salvage; pyridoxal 5'-phosphate from pyridoxine 5'-phosphate: step 1/1. Its function is as follows. Catalyzes the oxidation of either pyridoxine 5'-phosphate (PNP) or pyridoxamine 5'-phosphate (PMP) into pyridoxal 5'-phosphate (PLP). This Rattus norvegicus (Rat) protein is Pyridoxine-5'-phosphate oxidase (Pnpo).